A 262-amino-acid chain; its full sequence is 3-methyl-2-oxobutanoate hydroxymethyltransferase (262 aa).

Residues D42 and D81 each coordinate Mg(2+). 3-methyl-2-oxobutanoate contacts are provided by residues 42–43 (DS), D81, and K110. E112 contacts Mg(2+). E180 acts as the Proton acceptor in catalysis.

Belongs to the PanB family. As to quaternary structure, homodecamer; pentamer of dimers. It depends on Mg(2+) as a cofactor.

Its subcellular location is the cytoplasm. The catalysed reaction is 3-methyl-2-oxobutanoate + (6R)-5,10-methylene-5,6,7,8-tetrahydrofolate + H2O = 2-dehydropantoate + (6S)-5,6,7,8-tetrahydrofolate. It participates in cofactor biosynthesis; (R)-pantothenate biosynthesis; (R)-pantoate from 3-methyl-2-oxobutanoate: step 1/2. Its function is as follows. Catalyzes the reversible reaction in which hydroxymethyl group from 5,10-methylenetetrahydrofolate is transferred onto alpha-ketoisovalerate to form ketopantoate. The sequence is that of 3-methyl-2-oxobutanoate hydroxymethyltransferase from Legionella pneumophila (strain Paris).